We begin with the raw amino-acid sequence, 217 residues long: Segregation and condensation protein B (217 aa).

This sequence belongs to the ScpB family. As to quaternary structure, homodimer. Homodimerization may be required to stabilize the binding of ScpA to the Smc head domains. Component of a cohesin-like complex composed of ScpA, ScpB and the Smc homodimer, in which ScpA and ScpB bind to the head domain of Smc. The presence of the three proteins is required for the association of the complex with DNA.

Its subcellular location is the cytoplasm. In terms of biological role, participates in chromosomal partition during cell division. May act via the formation of a condensin-like complex containing Smc and ScpA that pull DNA away from mid-cell into both cell halves. This is Segregation and condensation protein B from Geobacillus kaustophilus (strain HTA426).